Here is a 250-residue protein sequence, read N- to C-terminus: Triosephosphate isomerase (250 aa).

Residue asparagine 8–lysine 10 coordinates substrate. The active-site Electrophile is histidine 96. Catalysis depends on glutamate 169, which acts as the Proton acceptor. Substrate contacts are provided by residues glycine 175, serine 214, and glycine 235–glycine 236.

Belongs to the triosephosphate isomerase family. As to quaternary structure, homodimer.

Its subcellular location is the cytoplasm. The enzyme catalyses D-glyceraldehyde 3-phosphate = dihydroxyacetone phosphate. It participates in carbohydrate biosynthesis; gluconeogenesis. Its pathway is carbohydrate degradation; glycolysis; D-glyceraldehyde 3-phosphate from glycerone phosphate: step 1/1. Involved in the gluconeogenesis. Catalyzes stereospecifically the conversion of dihydroxyacetone phosphate (DHAP) to D-glyceraldehyde-3-phosphate (G3P). In Oleidesulfovibrio alaskensis (strain ATCC BAA-1058 / DSM 17464 / G20) (Desulfovibrio alaskensis), this protein is Triosephosphate isomerase.